The sequence spans 266 residues: Beta-lactamase OXA-10 (266 aa).

Residues 1–19 (MKTFAAYVIIACLSSTALA) form the signal peptide. Cysteines 44 and 51 form a disulfide. Residue Ser-67 is the Acyl-ester intermediate of the active site. Lys-70 carries the post-translational modification N6-carboxylysine. Residues Ser-115, Thr-206, Phe-208, and Arg-250 each coordinate a beta-lactam.

The protein belongs to the class-D beta-lactamase family. Dimer.

Its subcellular location is the periplasm. The catalysed reaction is a beta-lactam + H2O = a substituted beta-amino acid. Its activity is regulated as follows. Activated, with respect to most beta-lactam substrates, in the presence of 0.05 M sodium bicarbonate. Its function is as follows. Class D beta-lactamase which confers resistance to the beta-lactam antibiotics, including penicillin, carbenicillin and oxacillin, and also some cephalosporins. Confers weak resistance to some carbapenems, in E.coli strain C600Z1. Acts via hydrolysis of the beta-lactam ring. Has penicillin- and cephalosporin-hydrolyzing activities. This Pseudomonas aeruginosa protein is Beta-lactamase OXA-10.